A 116-amino-acid chain; its full sequence is Somatostatin (116 aa).

Residues 1–24 (MLSCRLQCALAALSIVLALGGVTG) form the signal peptide. Positions 25–88 (APSDPRLRQF…QDEMRLELQR (64 aa)) are excised as a propeptide. An Alanine amide modification is found at Ala-43. Positions 62–99 (QTENDALEPEDLSQAAEQDEMRLELQRSANSNPAMAPR) are disordered. Cys-105 and Cys-116 form a disulfide bridge.

Belongs to the somatostatin family. C-terminal amidation of the neuronostatin peptide is required for its biological activity, including for the regulation of mean arterial pressure. In terms of tissue distribution, expressed in the pancreas and the spleen (at protein level).

Its subcellular location is the secreted. In terms of biological role, inhibits the secretion of pituitary hormones, including that of growth hormone/somatotropin (GH1), PRL, ACTH, luteinizing hormone (LH) and TSH. Also impairs ghrelin- and GnRH-stimulated secretion of GH1 and LH; the inhibition of ghrelin-stimulated secretion of GH1 can be further increased by neuronostatin. May enhance low-glucose-induced glucagon release by pancreatic alpha cells. This effect may be mediated by binding to GPR107 and PKA activation. May regulate cardiac contractile function. May compromise cardiomyocyte viability. In the central nervous system, may impair memory retention and may affect hippocampal excitability. May also have anxiolytic and anorexigenic effects. May play a role in arterial pressure regulation. May inhibit basal, but not ghrelin- or GnRH-stimulated secretion of GH1 or LH, but does not affect the release of other pituitary hormones, including PRL, ACTH, FSH or TSH. Potentiates inhibitory action of somatostatin on ghrelin-stimulated secretion of GH1, but not that on GnRH-stimulated secretion of LH. This chain is Somatostatin (SST), found in Sus scrofa (Pig).